The chain runs to 345 residues: Ferrochelatase (345 aa).

The Fe cation site is built by His215 and Glu296.

It belongs to the ferrochelatase family.

The protein resides in the cytoplasm. The catalysed reaction is heme b + 2 H(+) = protoporphyrin IX + Fe(2+). It functions in the pathway porphyrin-containing compound metabolism; protoheme biosynthesis; protoheme from protoporphyrin-IX: step 1/1. In terms of biological role, catalyzes the ferrous insertion into protoporphyrin IX. Essential for normal nodule development. This chain is Ferrochelatase, found in Bradyrhizobium diazoefficiens (strain JCM 10833 / BCRC 13528 / IAM 13628 / NBRC 14792 / USDA 110).